A 205-amino-acid chain; its full sequence is Carboxysome shell protein CsoS1D (205 aa).

BMC circularly permuted domains are found at residues 3–100 and 106–205; these read ELRT…TREY and VVMW…TCRS. Residues 68–69 carry the Gates the pore motif; that stretch reads ER.

This sequence belongs to the EutL/PduB family. Homotrimer. Forms a dimer of stacked trimers, the same faces interact. Probably forms a CsoS1-CsoS1D-CsoS2 complex.

The protein resides in the carboxysome. Part of the carboxysome shell, a polyhedral inclusion where RuBisCO (ribulose bisphosphate carboxylase, cbbL-cbbS) is sequestered. It may control transport of RuBisCO reactants in and out of the carboxysome. This chain is Carboxysome shell protein CsoS1D, found in Hydrogenovibrio crunogenus (strain DSM 25203 / XCL-2) (Thiomicrospira crunogena).